A 373-amino-acid polypeptide reads, in one-letter code: Probable peptidoglycan glycosyltransferase FtsW (373 aa).

A run of 9 helical transmembrane segments spans residues 15 to 35, 48 to 68, 80 to 100, 144 to 164, 168 to 188, 192 to 212, 278 to 298, 311 to 331, and 342 to 362; these read LVIL…VYSA, FYFL…MAVA, AVPI…PGIG, FFST…LILL, DLGA…AAGT, YIIA…MNVD, LGLI…LRGV, FLAF…MAVV, and LPFI…VGIL.

Belongs to the SEDS family. FtsW subfamily.

Its subcellular location is the cell inner membrane. The catalysed reaction is [GlcNAc-(1-&gt;4)-Mur2Ac(oyl-L-Ala-gamma-D-Glu-L-Lys-D-Ala-D-Ala)](n)-di-trans,octa-cis-undecaprenyl diphosphate + beta-D-GlcNAc-(1-&gt;4)-Mur2Ac(oyl-L-Ala-gamma-D-Glu-L-Lys-D-Ala-D-Ala)-di-trans,octa-cis-undecaprenyl diphosphate = [GlcNAc-(1-&gt;4)-Mur2Ac(oyl-L-Ala-gamma-D-Glu-L-Lys-D-Ala-D-Ala)](n+1)-di-trans,octa-cis-undecaprenyl diphosphate + di-trans,octa-cis-undecaprenyl diphosphate + H(+). The protein operates within cell wall biogenesis; peptidoglycan biosynthesis. In terms of biological role, peptidoglycan polymerase that is essential for cell division. The sequence is that of Probable peptidoglycan glycosyltransferase FtsW from Geobacter sulfurreducens (strain DL-1 / KN400).